Reading from the N-terminus, the 300-residue chain is Inosose dehydratase (300 aa).

The protein belongs to the IolE/MocC family. Glutathione serves as cofactor. Requires Co(2+) as cofactor. It depends on Mn(2+) as a cofactor.

The catalysed reaction is scyllo-inosose = 3D-3,5/4-trihydroxycyclohexane-1,2-dione + H2O. Catalyzes the dehydration of inosose (2-keto-myo-inositol, 2KMI or 2,4,6/3,5-pentahydroxycyclohexanone) to 3D-(3,5/4)-trihydroxycyclohexane-1,2-dione (D-2,3-diketo-4-deoxy-epi-inositol). The protein is Inosose dehydratase of Mesomycoplasma hyopneumoniae (strain J / ATCC 25934 / NCTC 10110) (Mycoplasma hyopneumoniae).